A 434-amino-acid chain; its full sequence is ATP-dependent RNA helicase RhlB (434 aa).

Positions 9-37 (KKFADFPLKPEILAALNENGFEFCTPIQA) match the Q motif motif. A Helicase ATP-binding domain is found at 40–219 (LPILLNAKDI…YDHMNDPEKV (180 aa)). 53-60 (AQTGTGKT) contacts ATP. The DEAD box motif lies at 165 to 168 (DEAD). The region spanning 243-390 (KMRLLLSLIE…VSNYDKDALL (148 aa)) is the Helicase C-terminal domain. The interval 390–434 (LDDIPPPARIHRKPPTSRTRDGGSKGAHRSGGNTSRPPRHRTRRP) is disordered.

The protein belongs to the DEAD box helicase family. RhlB subfamily. As to quaternary structure, component of the RNA degradosome, which is a multiprotein complex involved in RNA processing and mRNA degradation.

The protein localises to the cytoplasm. The catalysed reaction is ATP + H2O = ADP + phosphate + H(+). DEAD-box RNA helicase involved in RNA degradation. Has RNA-dependent ATPase activity and unwinds double-stranded RNA. The sequence is that of ATP-dependent RNA helicase RhlB from Shewanella frigidimarina (strain NCIMB 400).